Consider the following 115-residue polypeptide: Translation initiation factor 1A 2 (115 aa).

Positions methionine 1–lysine 34 are disordered. The span at aspartate 22–lysine 34 shows a compositional bias: basic and acidic residues. The region spanning threonine 27–threonine 101 is the S1-like domain.

It belongs to the eIF-1A family.

Functionally, seems to be required for maximal rate of protein biosynthesis. Enhances ribosome dissociation into subunits and stabilizes the binding of the initiator Met-tRNA(I) to 40 S ribosomal subunits. This chain is Translation initiation factor 1A 2, found in Methanosarcina barkeri (strain Fusaro / DSM 804).